Here is a 282-residue protein sequence, read N- to C-terminus: Dihydroorotate dehydrogenase B (NAD(+)), electron transfer subunit homolog (282 aa).

The region spanning Gly-2–Ile-100 is the FAD-binding FR-type domain. Residues Cys-225, Cys-228, and Cys-240 each coordinate [2Fe-2S] cluster.

The protein belongs to the PyrK family. [2Fe-2S] cluster serves as cofactor. It depends on FAD as a cofactor.

This chain is Dihydroorotate dehydrogenase B (NAD(+)), electron transfer subunit homolog, found in Thermotoga maritima (strain ATCC 43589 / DSM 3109 / JCM 10099 / NBRC 100826 / MSB8).